A 329-amino-acid chain; its full sequence is Ubiquitin carboxyl-terminal hydrolase isozyme L5 (329 aa).

Residues 7–225 form the UCH catalytic domain; the sequence is EWCLMESDPG…IRFNLMAIVS (219 aa). Lys-47 bears the N6-succinyllysine mark. The active-site Nucleophile is Cys-88. The residue at position 158 (Lys-158) is an N6-acetyllysine. The active-site Proton donor is the His-164. At Lys-289 the chain carries N6-succinyllysine. The ULD domain occupies 291–319; it reads NYLPFIMELLKTLAEHQQLIPLVEKAKEK. Residues 313–329 form an interaction with ADRM1 region; that stretch reads VEKAKEKQNAKKAQETK.

The protein belongs to the peptidase C12 family. As to quaternary structure, component of the 19S (PA700) regulatory complex of the 26S proteasome. Interacts with ADRM1 and NFRKB. Component of the INO80 complex; specifically part of a complex module associated with N-terminus of INO80.

It localises to the cytoplasm. The protein localises to the nucleus. It catalyses the reaction Thiol-dependent hydrolysis of ester, thioester, amide, peptide and isopeptide bonds formed by the C-terminal Gly of ubiquitin (a 76-residue protein attached to proteins as an intracellular targeting signal).. Its activity is regulated as follows. Activated by ADRM1. Inhibited by interaction with NFRKB. In terms of biological role, protease that specifically cleaves 'Lys-48'-linked polyubiquitin chains. Deubiquitinating enzyme associated with the 19S regulatory subunit of the 26S proteasome. Putative regulatory component of the INO80 complex; however is inactive in the INO80 complex and is activated by a transient interaction of the INO80 complex with the proteasome via ADRM1. The sequence is that of Ubiquitin carboxyl-terminal hydrolase isozyme L5 (Uchl5) from Mus musculus (Mouse).